The chain runs to 431 residues: Glucose-1-phosphate adenylyltransferase (431 aa).

Residues tyrosine 108, glycine 174, 189-190 (EK), and serine 207 each bind alpha-D-glucose 1-phosphate.

It belongs to the bacterial/plant glucose-1-phosphate adenylyltransferase family. Homotetramer.

The catalysed reaction is alpha-D-glucose 1-phosphate + ATP + H(+) = ADP-alpha-D-glucose + diphosphate. The protein operates within glycan biosynthesis; glycogen biosynthesis. In terms of biological role, involved in the biosynthesis of ADP-glucose, a building block required for the elongation reactions to produce glycogen. Catalyzes the reaction between ATP and alpha-D-glucose 1-phosphate (G1P) to produce pyrophosphate and ADP-Glc. The sequence is that of Glucose-1-phosphate adenylyltransferase from Actinobacillus succinogenes (strain ATCC 55618 / DSM 22257 / CCUG 43843 / 130Z).